Reading from the N-terminus, the 114-residue chain is Large ribosomal subunit protein P2 (114 aa).

The tract at residues 84 to 114 is disordered; that stretch reads TDALQAGSKKGETKEGPKEESDEDMGFGLFD. Positions 92–102 are enriched in basic and acidic residues; that stretch reads KKGETKEGPKE.

The protein belongs to the eukaryotic ribosomal protein P1/P2 family. P1 and P2 exist as dimers at the large ribosomal subunit. Phosphorylated.

Its function is as follows. Plays an important role in the elongation step of protein synthesis. The protein is Large ribosomal subunit protein P2 (rpp-2) of Brugia malayi (Filarial nematode worm).